Here is a 264-residue protein sequence, read N- to C-terminus: Thiazole synthase (264 aa).

Lys-106 (schiff-base intermediate with DXP) is an active-site residue. Residues Gly-167, Ala-193–Gly-194, and Asn-215–Ser-216 contribute to the 1-deoxy-D-xylulose 5-phosphate site.

This sequence belongs to the ThiG family. In terms of assembly, homotetramer. Forms heterodimers with either ThiH or ThiS.

It is found in the cytoplasm. The catalysed reaction is [ThiS sulfur-carrier protein]-C-terminal-Gly-aminoethanethioate + 2-iminoacetate + 1-deoxy-D-xylulose 5-phosphate = [ThiS sulfur-carrier protein]-C-terminal Gly-Gly + 2-[(2R,5Z)-2-carboxy-4-methylthiazol-5(2H)-ylidene]ethyl phosphate + 2 H2O + H(+). The protein operates within cofactor biosynthesis; thiamine diphosphate biosynthesis. Catalyzes the rearrangement of 1-deoxy-D-xylulose 5-phosphate (DXP) to produce the thiazole phosphate moiety of thiamine. Sulfur is provided by the thiocarboxylate moiety of the carrier protein ThiS. In vitro, sulfur can be provided by H(2)S. The polypeptide is Thiazole synthase (Pseudomonas fluorescens (strain SBW25)).